The sequence spans 21 residues: uncharacterized protein (21 aa).

This is an uncharacterized protein from Dictyostelium discoideum (Social amoeba).